Consider the following 106-residue polypeptide: Large ribosomal subunit protein uL24 (106 aa).

It belongs to the universal ribosomal protein uL24 family. Part of the 50S ribosomal subunit.

One of two assembly initiator proteins, it binds directly to the 5'-end of the 23S rRNA, where it nucleates assembly of the 50S subunit. Its function is as follows. One of the proteins that surrounds the polypeptide exit tunnel on the outside of the subunit. The polypeptide is Large ribosomal subunit protein uL24 (Acidithiobacillus ferrooxidans (strain ATCC 53993 / BNL-5-31) (Leptospirillum ferrooxidans (ATCC 53993))).